Here is a 1019-residue protein sequence, read N- to C-terminus: Outer capsid protein P3 (1019 aa).

Belongs to the phytoreovirus inner capsid protein P3 family. In terms of assembly, homodimer. Homomultimer.

It is found in the virion. The protein localises to the host cytoplasm. Functionally, capsid protein which self-assembles to form the inner icosahedral capsid with a T=2 symmetry, and consisting of 60 P3 dimers. The polypeptide is Outer capsid protein P3 (Alopecurus aequalis (Barnyard grass)).